Consider the following 318-residue polypeptide: MSVPAEAGKRRDRRRHVLDLDDFSTQEIEEILETAVSMKEVLGRAIKQVPTLRGKTIVNMFFEESTRTRISFELAGKALSANVVNFTARGSSVEKGESLIDTVRTLQALGADMLVMRHSESGAPYLAAQYFHGSVINAGDGRHAHPTQALLDLFTVRQRLGRIEGLKVVIVGDILHSRVARSNLWGFTRMGASVTLCAPQTLIGPESFWKATWPDLTITSNLDECIKDADVIMTLRLQKERMEAGLLPSLREYSRFFAITAERVARAAPHCLVMHPGPMNEGVEIMPDVATSAQSVIEEQVANGVAVRMALLYRLSGE.

Positions 67 and 68 each coordinate carbamoyl phosphate. L-aspartate is bound at residue K95. Residues R117, H145, and Q148 each contribute to the carbamoyl phosphate site. Residues R178 and R236 each coordinate L-aspartate. Carbamoyl phosphate contacts are provided by G277 and P278.

Belongs to the aspartate/ornithine carbamoyltransferase superfamily. ATCase family. As to quaternary structure, heterododecamer (2C3:3R2) of six catalytic PyrB chains organized as two trimers (C3), and six regulatory PyrI chains organized as three dimers (R2).

It catalyses the reaction carbamoyl phosphate + L-aspartate = N-carbamoyl-L-aspartate + phosphate + H(+). Its pathway is pyrimidine metabolism; UMP biosynthesis via de novo pathway; (S)-dihydroorotate from bicarbonate: step 2/3. Catalyzes the condensation of carbamoyl phosphate and aspartate to form carbamoyl aspartate and inorganic phosphate, the committed step in the de novo pyrimidine nucleotide biosynthesis pathway. The chain is Aspartate carbamoyltransferase catalytic subunit from Roseiflexus sp. (strain RS-1).